We begin with the raw amino-acid sequence, 1057 residues long: mRNA export factor elf1 (1057 aa).

ABC transporter domains follow at residues 440–659 (IEEE…VKPE) and 692–1019 (LKMT…KKKL). ATP contacts are provided by residues 477-484 (GHNGCGKS) and 726-733 (GPNGAGKS). Ser-733 is subject to Phosphoserine. The Chromo domain maps to 820-869 (RRVEALIGRQKLKKSFQYEIKWFGKPHKYNTWVSREILLENGFQKFVQAF). A compositionally biased stretch (basic and acidic residues) spans 1020–1036 (TRNEIKAKERRAREREL). A disordered region spans residues 1020-1057 (TRNEIKAKERRARERELAWLQSPKGTEKPKSFFSDDEE). Phosphoserine occurs at positions 1041 and 1053.

Belongs to the ABC transporter superfamily. ABCF family. EF3 subfamily.

The protein localises to the cytoplasm. It localises to the nucleus. Its function is as follows. Has a direct role in the mRNA export process. Appears to act within the rae1 mediated mRNA export pathway. The protein is mRNA export factor elf1 (elf1) of Schizosaccharomyces pombe (strain 972 / ATCC 24843) (Fission yeast).